A 405-amino-acid polypeptide reads, in one-letter code: Coiled-coil domain-containing protein 91 (405 aa).

Positions 1–16 (MDDDDFGGFEAAETFD) are GGA1-binding motif. Positions 1 to 27 (MDDDDFGGFEAAETFDGGNGETQTTSP) are disordered. Residues Ser43 and Ser46 each carry the phosphoserine modification. A coiled-coil region spans residues 126–376 (GANVSNIQLR…QKRLDQVIRQ (251 aa)). The homodimerization stretch occupies residues 210–377 (LSIIVDEYKH…KRLDQVIRQR (168 aa)).

Homodimer. Interacts with GGA1, GGA2 and AP1G1.

It is found in the membrane. The protein localises to the golgi apparatus. Its subcellular location is the trans-Golgi network membrane. The protein resides in the trans-Golgi network. Involved in the regulation of membrane traffic through the trans-Golgi network (TGN). Functions in close cooperation with the GGAs in the sorting of hydrolases to lysosomes. The polypeptide is Coiled-coil domain-containing protein 91 (CCDC91) (Pongo abelii (Sumatran orangutan)).